Reading from the N-terminus, the 79-residue chain is Acyl carrier protein (79 aa).

In terms of domain architecture, Carrier spans 3–78 (QEILEKVCSI…DAVKFIEEKK (76 aa)). Serine 38 carries the O-(pantetheine 4'-phosphoryl)serine modification.

It belongs to the acyl carrier protein (ACP) family. 4'-phosphopantetheine is transferred from CoA to a specific serine of apo-ACP by AcpS. This modification is essential for activity because fatty acids are bound in thioester linkage to the sulfhydryl of the prosthetic group.

The protein localises to the cytoplasm. It functions in the pathway lipid metabolism; fatty acid biosynthesis. In terms of biological role, carrier of the growing fatty acid chain in fatty acid biosynthesis. This Prochlorococcus marinus (strain MIT 9301) protein is Acyl carrier protein.